A 726-amino-acid chain; its full sequence is MAAAKWLIASLAFASSGLAFTPEDFISAPRRGEAIPDPKGELAVFHVSKYNFDKKDRPSGWNLLNLKNGDISVLTTDSDVSEITWLGDGTKVVYVNGTDSVEGGVGIWISDAKNFGNAYKAGSVNGAFSGLKLAKAGDKINFVGYGQSTTKGDLYNEAAAKEAVSSARIYDGLFVRHWDTYVGTQFNAVFSGSLTKNGDKYSFDGKLKNLVQPVKYAESPYPPFGGSGDYDLSSDGKTVAFMSKAPELPKANLTTSYIFLVPHDGSRVAEPINKRNGPRTPQGIEGASSSPVFSPDGKRIAYLQMATKNYESDRRVIHIAEVGSNKPVQRIASSWDRSPEAVKWSSDGRTLYVTAEDHATGKLFTLPADARDNHKPSVVKHDGSVSSFYFIGSSKSVLISGNSLWSNALYQVATPGRPNRKLFYANEHDPELKGLGPKDIEPLWVDGARTKIHSWIVKPTGFDKNKVYPLAFLIHGGPQGSWGDSWSTRWNPRVWADQGYVVVAPNPTGSTGFGQKLTDDITNDWGGAPYKDLVKIWEHVRDHIKYIDTDNGIAAGASFGGFMVNWIQGQDLGRKFKALVSHDGTFVGSSKIGTDELFFIEHDFNGTFFEARQNYDRWDCSKPELVAKWSTPQLVIHNDFDFRLSVAEGVGLFNVLQEKGIPSRFLNFPDETHWVTKPENSLVWHQQVLGWINKWSGINKSNPKSIKLSDCPIEVIDHEAHSYFDY.

Positions 1 to 19 are cleaved as a signal peptide; sequence MAAAKWLIASLAFASSGLA. Residues Asn-96 and Asn-252 are each glycosylated (N-linked (GlcNAc...) asparagine). Residues 269 to 291 are disordered; it reads AEPINKRNGPRTPQGIEGASSSP. Residue Ser-558 is the Charge relay system of the active site. N-linked (GlcNAc...) asparagine glycosylation occurs at Asn-605. Catalysis depends on charge relay system residues Asp-641 and His-673. N-linked (GlcNAc...) asparagine glycosylation occurs at Asn-699.

It belongs to the peptidase S9C family.

Its subcellular location is the secreted. The sequence is that of Dipeptidyl-peptidase 5 (DPPV) from Arthroderma benhamiae (Trichophyton mentagrophytes).